Here is a 130-residue protein sequence, read N- to C-terminus: Large ribosomal subunit protein bL20 (130 aa).

The protein belongs to the bacterial ribosomal protein bL20 family.

Its function is as follows. Binds directly to 23S ribosomal RNA and is necessary for the in vitro assembly process of the 50S ribosomal subunit. It is not involved in the protein synthesizing functions of that subunit. The chain is Large ribosomal subunit protein bL20 from Clavibacter michiganensis subsp. michiganensis (strain NCPPB 382).